The chain runs to 158 residues: Protein Smg homolog (158 aa).

The protein belongs to the Smg family.

The protein is Protein Smg homolog of Vibrio atlanticus (strain LGP32) (Vibrio splendidus (strain Mel32)).